The primary structure comprises 129 residues: Small ribosomal subunit protein uS8 (129 aa).

Belongs to the universal ribosomal protein uS8 family. As to quaternary structure, part of the 30S ribosomal subunit. Contacts proteins S5 and S12.

One of the primary rRNA binding proteins, it binds directly to 16S rRNA central domain where it helps coordinate assembly of the platform of the 30S subunit. The chain is Small ribosomal subunit protein uS8 from Mycoplasma capricolum subsp. capricolum (strain California kid / ATCC 27343 / NCTC 10154).